The sequence spans 339 residues: Phenylalanine--tRNA ligase alpha subunit (339 aa).

Glu-254 contacts Mg(2+).

Belongs to the class-II aminoacyl-tRNA synthetase family. Phe-tRNA synthetase alpha subunit type 1 subfamily. As to quaternary structure, tetramer of two alpha and two beta subunits. The cofactor is Mg(2+).

Its subcellular location is the cytoplasm. The enzyme catalyses tRNA(Phe) + L-phenylalanine + ATP = L-phenylalanyl-tRNA(Phe) + AMP + diphosphate + H(+). This is Phenylalanine--tRNA ligase alpha subunit from Clostridium acetobutylicum (strain ATCC 824 / DSM 792 / JCM 1419 / IAM 19013 / LMG 5710 / NBRC 13948 / NRRL B-527 / VKM B-1787 / 2291 / W).